Consider the following 252-residue polypeptide: Uridylate kinase (252 aa).

20–23 (KLSG) contributes to the ATP binding site. The tract at residues 28 to 33 (GGGGLG) is involved in allosteric activation by GTP. Position 62 (Gly62) interacts with UMP. Positions 63 and 67 each coordinate ATP. UMP is bound by residues Asp82 and 143 to 150 (MGMPYFST). 3 residues coordinate ATP: Asn171, Tyr177, and Asp180.

This sequence belongs to the UMP kinase family. In terms of assembly, homohexamer.

It localises to the cytoplasm. The catalysed reaction is UMP + ATP = UDP + ADP. It functions in the pathway pyrimidine metabolism; CTP biosynthesis via de novo pathway; UDP from UMP (UMPK route): step 1/1. With respect to regulation, allosterically activated by GTP. Inhibited by UTP. Its function is as follows. Catalyzes the reversible phosphorylation of UMP to UDP. This Streptomyces avermitilis (strain ATCC 31267 / DSM 46492 / JCM 5070 / NBRC 14893 / NCIMB 12804 / NRRL 8165 / MA-4680) protein is Uridylate kinase.